Reading from the N-terminus, the 307-residue chain is Acyl transferase (307 aa).

Residues Ser-116, Asp-213, and His-243 each act as charge relay system in the active site.

It belongs to the LuxD family.

It functions in the pathway lipid metabolism; fatty acid reduction for biolumincescence. Acyl transferase is part of the fatty acid reductase system required for aldehyde biosynthesis; it produces fatty acids for the luminescent reaction. The sequence is that of Acyl transferase from Aliivibrio fischeri (strain ATCC 700601 / ES114) (Vibrio fischeri).